Here is a 333-residue protein sequence, read N- to C-terminus: 1,5-anhydro-D-fructose reductase (333 aa).

NADP(+)-binding positions include Ala9–Ile12, Ser33–Ser34, Arg38, Thr71–His76, Glu93–Lys94, Asn120, Trp162–Arg163, and Tyr283.

Belongs to the Gfo/Idh/MocA family. In terms of assembly, monomer.

The catalysed reaction is 1,5-anhydro-D-mannitol + NADP(+) = 1,5-anhydro-D-fructose + NADPH + H(+). Catalyzes the NADPH-specific reduction of 1,5-anhydro-D-fructose to 1,5-anhydro-D-mannitol. The protein is 1,5-anhydro-D-fructose reductase (afr) of Rhizobium meliloti (strain 1021) (Ensifer meliloti).